Here is a 207-residue protein sequence, read N- to C-terminus: Ribosome maturation factor RimM (207 aa).

One can recognise a PRC barrel domain in the interval 114–207; the sequence is DDEYYWVDLI…RIDSDWPLDY (94 aa).

This sequence belongs to the RimM family. Binds ribosomal protein uS19.

The protein resides in the cytoplasm. An accessory protein needed during the final step in the assembly of 30S ribosomal subunit, possibly for assembly of the head region. Essential for efficient processing of 16S rRNA. May be needed both before and after RbfA during the maturation of 16S rRNA. It has affinity for free ribosomal 30S subunits but not for 70S ribosomes. The polypeptide is Ribosome maturation factor RimM (Bordetella pertussis (strain Tohama I / ATCC BAA-589 / NCTC 13251)).